The sequence spans 289 residues: Polyamine aminopropyltransferase (289 aa).

The PABS domain occupies 5-238; sequence TVWHETLHDQ…GIMTFAWATD (234 aa). Gln-33 is an S-methyl-5'-thioadenosine binding site. Spermidine-binding residues include His-64 and Asp-88. S-methyl-5'-thioadenosine-binding positions include Glu-108 and 140 to 141; that span reads DG. The active-site Proton acceptor is Asp-158. 158–161 provides a ligand contact to spermidine; that stretch reads DCTD. Residue Pro-165 participates in S-methyl-5'-thioadenosine binding.

It belongs to the spermidine/spermine synthase family. As to quaternary structure, homodimer or homotetramer.

It is found in the cytoplasm. It catalyses the reaction S-adenosyl 3-(methylsulfanyl)propylamine + putrescine = S-methyl-5'-thioadenosine + spermidine + H(+). Its pathway is amine and polyamine biosynthesis; spermidine biosynthesis; spermidine from putrescine: step 1/1. Catalyzes the irreversible transfer of a propylamine group from the amino donor S-adenosylmethioninamine (decarboxy-AdoMet) to putrescine (1,4-diaminobutane) to yield spermidine. The chain is Polyamine aminopropyltransferase from Enterobacter sp. (strain 638).